Reading from the N-terminus, the 202-residue chain is MRYWYLRLAVFLGALAVPAWWLYQAWIFALGPDPGKTLVDRLGLGALVLLLLTLAMTPLQKLSGWPGWIAVRRQLGLWCFTYVLLHLSAYCVFILGLDWGQLGIELSKRPYIIVGMLGFICLFLLAITSNRFAMRKLGSRWKKLHRLVYLILGLGLLHMLWVVRADLEEWTLYAVVGASLMLLRLPSIARRLPRLRTRPGVS.

6 consecutive transmembrane segments (helical) span residues 8-28 (LAVF…AWIF), 42-62 (LGLG…LQKL), 75-95 (LGLW…VFIL), 110-130 (PYII…ITSN), 147-167 (LVYL…RADL), and 169-189 (EWTL…PSIA).

The protein belongs to the MsrQ family. As to quaternary structure, heterodimer of a catalytic subunit (MsrP) and a heme-binding subunit (MsrQ). The cofactor is FMN. It depends on heme b as a cofactor.

The protein resides in the cell inner membrane. Its function is as follows. Part of the MsrPQ system that repairs oxidized periplasmic proteins containing methionine sulfoxide residues (Met-O), using respiratory chain electrons. Thus protects these proteins from oxidative-stress damage caused by reactive species of oxygen and chlorine generated by the host defense mechanisms. MsrPQ is essential for the maintenance of envelope integrity under bleach stress, rescuing a wide series of structurally unrelated periplasmic proteins from methionine oxidation. MsrQ provides electrons for reduction to the reductase catalytic subunit MsrP, using the quinone pool of the respiratory chain. In Pseudomonas aeruginosa (strain LESB58), this protein is Protein-methionine-sulfoxide reductase heme-binding subunit MsrQ.